The sequence spans 203 residues: uncharacterized protein (203 aa).

The tract at residues leucine 174–histidine 203 is disordered.

This is an uncharacterized protein from Homo sapiens (Human).